The primary structure comprises 312 residues: Transcription initiation factor IIB 1 (312 aa).

The TFIIB-type zinc finger occupies 12 to 43 (EIERCPECGSTNLIRDYEHGELVCGECGAVIE). Zn(2+) contacts are provided by Cys16, Cys19, Cys35, and Cys38. 2 consecutive repeat copies span residues 129–212 (QELE…SRYL) and 223–304 (DYIS…ELTE).

Belongs to the TFIIB family.

Its function is as follows. Stabilizes TBP binding to an archaeal box-A promoter. Also responsible for recruiting RNA polymerase II to the pre-initiation complex (DNA-TBP-TFIIB). This is Transcription initiation factor IIB 1 from Thermoplasma volcanium (strain ATCC 51530 / DSM 4299 / JCM 9571 / NBRC 15438 / GSS1).